The following is a 372-amino-acid chain: Chaperone protein DnaJ (372 aa).

One can recognise a J domain in the interval 5–69 (EFYDRLGVSK…QKRAAYDQYG (65 aa)). The segment at 129–211 (GTEKEVKYHR…CHGTGHEKQA (83 aa)) adopts a CR-type zinc-finger fold. C142, C145, C159, C162, C185, C188, C199, and C202 together coordinate Zn(2+). 4 CXXCXGXG motif repeats span residues 142-149 (CRTCNGSG), 159-166 (CGRCHGAG), 185-192 (CDVCHGRG), and 199-206 (CTTCHGTG).

It belongs to the DnaJ family. In terms of assembly, homodimer. Zn(2+) serves as cofactor.

It is found in the cytoplasm. Its function is as follows. Participates actively in the response to hyperosmotic and heat shock by preventing the aggregation of stress-denatured proteins and by disaggregating proteins, also in an autonomous, DnaK-independent fashion. Unfolded proteins bind initially to DnaJ; upon interaction with the DnaJ-bound protein, DnaK hydrolyzes its bound ATP, resulting in the formation of a stable complex. GrpE releases ADP from DnaK; ATP binding to DnaK triggers the release of the substrate protein, thus completing the reaction cycle. Several rounds of ATP-dependent interactions between DnaJ, DnaK and GrpE are required for fully efficient folding. Also involved, together with DnaK and GrpE, in the DNA replication of plasmids through activation of initiation proteins. The sequence is that of Chaperone protein DnaJ from Streptococcus pneumoniae (strain ATCC BAA-255 / R6).